Consider the following 172-residue polypeptide: MVTATLREMLISAEAIRFGDFTLASGKKSTVYIDIKKAITSPAILKKIAAEVLTHSTDFDAVAGVAVGGVPLAVSVSLASDKPYVIIRKEQKGHGLASLIIGDVAGKRILLVEDVTTSGGSAVFGIEQLRSAGAVVTDVIAVVDRNEGAGKTLQGLDITLTPLVRMQDLING.

5-phospho-alpha-D-ribose 1-diphosphate-binding positions include R88, K89, K92, H94, and 113–121 (EDVTTSGGS). The orotate site is built by T117 and R145.

Belongs to the purine/pyrimidine phosphoribosyltransferase family. PyrE subfamily. In terms of assembly, homodimer. It depends on Mg(2+) as a cofactor.

It carries out the reaction orotidine 5'-phosphate + diphosphate = orotate + 5-phospho-alpha-D-ribose 1-diphosphate. The protein operates within pyrimidine metabolism; UMP biosynthesis via de novo pathway; UMP from orotate: step 1/2. Its function is as follows. Catalyzes the transfer of a ribosyl phosphate group from 5-phosphoribose 1-diphosphate to orotate, leading to the formation of orotidine monophosphate (OMP). The polypeptide is Orotate phosphoribosyltransferase (Methanospirillum hungatei JF-1 (strain ATCC 27890 / DSM 864 / NBRC 100397 / JF-1)).